Reading from the N-terminus, the 1363-residue chain is MQPGAALNRRLWLCLGLLQGLANGYSMTPPTLNITEDSYVIDTGDSLSISCRGQHPLEWTWRGAQEVLTTGGKDSEDTQVVQDCEGTEARPYCKVLSLAQTHANNTGSYYCYYKYIKARIEGTTAASTYVFVRDFEQPFINKPDTLLVNRKDSMWVPCLVSIPGLNITLRSQSSVLHPDGQEVLWDDRRGMRVPTLLLRDALYLQCETTWGDQDFLSNPFLVHITGNELYDIQLYPKKSLELLVGEKLVLNCTVWAEFDSGVTFDWDYPGKQAERAKWVPERRSQQTHTELSSILTIHNVSQHDLGPYVCEANNGIQQFRESTEVIVHEKPFISVEWLKGPVLEATAGDEMVKLPVKLAAYPPPEFQWYKDRKAVTGRHNPHALVLKEVTEASAGVYTLALWNSAAGLRQNISLELVVNVPPHIHEKEASSPSIYSRHSRQTLTCTTYGVPQPLSVQWHWRPWTPCKTFAQRSLRRRQPRDGMPQCRDWKEVTTQDAVNPIESLDTWTESVEGKNKTVSKLVIQDANVSAMYKCVVFNKVGQDERLIYFYVTTIPDGFSIESEPSEDPLEGQSVRLSCRADNYTYEHLRWYRLNLSTLHDAQGNPLLLDCKNVHLFATPLEANLEEAEPGARHATLSLNIPRVAPEDEGDYVCEVQDRRSQDKHCHKKYLSVQALEAPRLTQNLTDLLVNVRTSLEMRCPVAGAHVPSIVWYKDERLLEKESGIDLADSNQRLSIQRVREEDAGRYLCSVCNAKGCVNSSASVAVEGSEDKGSMEIVILIGTGVIAVFFWVLLLLIFCNMKRPAHADIKTGYLSIIMDPGEVPLEEQCEYLSYDVSQWEFPRERLHLGRVLGHGAFGKVVEASAFGINKGSSCDTVAVKMLKEGATASEHRALMSELKILIHIGNHLNVVNLLGACTKPNGPLMVIVEFCKYGNLSNFLRVKRETFDPYAEKSPEQRRRFRAMVEGAKADRRRLGSTDRALFTRFLMGKGSARRAPFVQEAEDLWLSPLTMEDLVCYSFQVARGMEFLASRKCIHRDLAARNILLSESDIVKICDFGLARDIYKDPDYVRKGSARLPLKWMAPESIFDKVYTTQSDVWSFGVLLWEIFSLGASPYPGVQINEEFCQRLKDGTRMRAPELATPAIRHIMQSCWSGDPKARPAFSDLVEILGDLLQGGGWQEEEEECMALHSSQSSEEDGFMQASTTALHITEADAESSPPSMHCHSLAARYYNCVSFPGRLVRGTKAPGSSRMKTFEELPMTPTTYKASVDNQTDSGMVLASEEFEQIESRHRQEGSFSRKDPGQHMDISRGHPDLQGRRRRPTQGAQGGKVFYNNEYGEVSQPCTEGDCCPSAGSTFFADSNY.

The N-terminal stretch at 1 to 24 (MQPGAALNRRLWLCLGLLQGLANG) is a signal peptide. The Extracellular segment spans residues 25 to 775 (YSMTPPTLNI…EGSEDKGSME (751 aa)). Residues Asn33, Asn104, Asn166, Asn251, Asn299, and Asn411 are each glycosylated (N-linked (GlcNAc...) asparagine). Ig-like C2-type domains follow at residues 44-118 (GDSL…YIKA), 151-213 (KDSM…WGDQ), 230-326 (YDIQ…TEVI), 331-415 (PFIS…ISLE), 422-552 (PHIH…FYVT), 555-671 (PDGF…KYLS), and 678-764 (PRLT…ASVA). Cystine bridges form between Cys51–Cys111 and Cys158–Cys206. Cysteines 252 and 310 form a disulfide. 3 disulfides stabilise this stretch: Cys445-Cys534, Cys466-Cys486, and Cys578-Cys653. Residues Asn515, Asn527, Asn582, Asn594, and Asn683 are each glycosylated (N-linked (GlcNAc...) asparagine). An intrachain disulfide couples Cys699 to Cys751. Asn758 carries N-linked (GlcNAc...) asparagine glycosylation. A helical transmembrane segment spans residues 776 to 796 (IVILIGTGVIAVFFWVLLLLI). Topologically, residues 797-1363 (FCNMKRPAHA…GSTFFADSNY (567 aa)) are cytoplasmic. A phosphotyrosine; by SRC mark is found at Tyr830 and Tyr833. The Protein kinase domain occupies 845–1173 (LHLGRVLGHG…DLVEILGDLL (329 aa)). ATP-binding positions include 851-859 (LGHGAFGKV) and Lys879. Residue Asp1037 is the Proton acceptor of the active site. Position 1063 is a phosphotyrosine; by autocatalysis and SRC (Tyr1063). Phosphotyrosine; by autocatalysis occurs at positions 1068, 1230, 1231, and 1265. Positions 1289 to 1317 (SRHRQEGSFSRKDPGQHMDISRGHPDLQG) are enriched in basic and acidic residues. Residues 1289–1330 (SRHRQEGSFSRKDPGQHMDISRGHPDLQGRRRRPTQGAQGGK) are disordered. 2 positions are modified to phosphotyrosine; by autocatalysis and SRC: Tyr1333 and Tyr1337. The residue at position 1363 (Tyr1363) is a Phosphotyrosine; by autocatalysis.

The protein belongs to the protein kinase superfamily. Tyr protein kinase family. CSF-1/PDGF receptor subfamily. As to quaternary structure, interacts with VEGFC and VEGFD. Monomer in the absence of bound VEGFC or VEGFD. Homodimer in the presence of bound VEGFC or VEGFD. Can also form a heterodimer with KDR. Interacts with PTPN14; the interaction is enhanced by stimulation with VEGFC. Interacts with CRK, GRB2, PTK2/FAK1, SHC1, PIK3R1 and PTPN11/SHP-2. Identified in a complex with SRC and ITGB1. Identified in a complex with SRC and ITGB1. Post-translationally, autophosphorylated on tyrosine residues upon ligand binding. Autophosphorylation occurs in trans, i.e. one subunit of the dimeric receptor phosphorylates tyrosine residues on the other subunit. Phosphorylation in response to H(2)O(2) is mediated by a process that requires SRC and PRKCD activity. Phosphorylation at Tyr-1068 is required for autophosphorylation at additional tyrosine residues. Phosphorylation at Tyr-1063 and Tyr-1337 is important for interaction with CRK and subsequent activation of MAPK8. Phosphorylation at Tyr-1230, Tyr-1231 and Tyr-1337 is important for interaction with GRB2 and subsequent activation of the AKT1 and MAPK1/ERK2 and/or MAPK3/ERK1 signaling pathways. In response to endothelial cell adhesion onto collagen, can also be phosphorylated in the absence of FLT4 kinase activity by SRC.

Its subcellular location is the cell membrane. It localises to the cytoplasm. It is found in the nucleus. The enzyme catalyses L-tyrosyl-[protein] + ATP = O-phospho-L-tyrosyl-[protein] + ADP + H(+). Its activity is regulated as follows. Present in an inactive conformation in the absence of bound ligand. Binding of VEGFC or VEGFD leads to dimerization and activation by autophosphorylation on tyrosine residues. Tyrosine-protein kinase that acts as a cell-surface receptor for VEGFC and VEGFD, and plays an essential role in adult lymphangiogenesis and in the development of the vascular network and the cardiovascular system during embryonic development. Promotes proliferation, survival and migration of endothelial cells, and regulates angiogenic sprouting. Signaling by activated FLT4 leads to enhanced production of VEGFC, and to a lesser degree VEGFA, thereby creating a positive feedback loop that enhances FLT4 signaling. Modulates KDR signaling by forming heterodimers. Mediates activation of the MAPK1/ERK2, MAPK3/ERK1 signaling pathway, of MAPK8 and the JUN signaling pathway, and of the AKT1 signaling pathway. Phosphorylates SHC1. Mediates phosphorylation of PIK3R1, the regulatory subunit of phosphatidylinositol 3-kinase. Promotes phosphorylation of MAPK8 at 'Thr-183' and 'Tyr-185', and of AKT1 at 'Ser-473'. This Rattus norvegicus (Rat) protein is Vascular endothelial growth factor receptor 3 (Flt4).